The chain runs to 464 residues: Soluble pyridine nucleotide transhydrogenase (464 aa).

35–44 is an FAD binding site; it reads DDRPQVGGNC.

This sequence belongs to the class-I pyridine nucleotide-disulfide oxidoreductase family. The cofactor is FAD.

It localises to the cytoplasm. The enzyme catalyses NAD(+) + NADPH = NADH + NADP(+). Functionally, conversion of NADPH, generated by peripheral catabolic pathways, to NADH, which can enter the respiratory chain for energy generation. The polypeptide is Soluble pyridine nucleotide transhydrogenase (Azotobacter vinelandii (strain DJ / ATCC BAA-1303)).